The primary structure comprises 120 residues: Large ribosomal subunit protein uL18 (120 aa).

Residues 1-23 form a disordered region; that stretch reads MKLSRKESVRRRHQRVRRKINGT. Residues 8 to 20 show a composition bias toward basic residues; the sequence is SVRRRHQRVRRKI.

The protein belongs to the universal ribosomal protein uL18 family. Part of the 50S ribosomal subunit; part of the 5S rRNA/L5/L18/L25 subcomplex. Contacts the 5S and 23S rRNAs.

Its function is as follows. This is one of the proteins that bind and probably mediate the attachment of the 5S RNA into the large ribosomal subunit, where it forms part of the central protuberance. In Microcystis aeruginosa (strain NIES-843 / IAM M-2473), this protein is Large ribosomal subunit protein uL18.